We begin with the raw amino-acid sequence, 372 residues long: MFSESPIKRRKSTRINVGNVPIGDGAPIAVQSMTNTDTMDVGATVAQIQAIQDAGADIVRVSVPTMDAAEAFKSIKEQVTIPLVADIHFDYRIALKVAKYGVDCLRINPGNIGSEERIRAVVDAAREHNIPIRIGVNGGSLERDLQEKYGEPSPEALLESAMRHVNILRRLDFDQFKISVKASDVFLAVGAYRLLAKEIDQPLHLGITEAGGMRSGSVKSAVGLGMLLAEGIGDTLRVSLAADPVQEIKVGFDILKSLRIRSRGINFIACPSCSRQEFDVVSTMNQLEERLEDIIEPVSVSVIGCVVNGPGEALVSDIGLAGASRRSGLYINGERQKARIDNNNIVEQLEGYVRDFIAKKQNQTPIDIKIVE.

[4Fe-4S] cluster is bound by residues Cys270, Cys273, Cys305, and Glu312.

This sequence belongs to the IspG family. [4Fe-4S] cluster is required as a cofactor.

The catalysed reaction is (2E)-4-hydroxy-3-methylbut-2-enyl diphosphate + oxidized [flavodoxin] + H2O + 2 H(+) = 2-C-methyl-D-erythritol 2,4-cyclic diphosphate + reduced [flavodoxin]. It functions in the pathway isoprenoid biosynthesis; isopentenyl diphosphate biosynthesis via DXP pathway; isopentenyl diphosphate from 1-deoxy-D-xylulose 5-phosphate: step 5/6. Functionally, converts 2C-methyl-D-erythritol 2,4-cyclodiphosphate (ME-2,4cPP) into 1-hydroxy-2-methyl-2-(E)-butenyl 4-diphosphate. In Pseudoalteromonas translucida (strain TAC 125), this protein is 4-hydroxy-3-methylbut-2-en-1-yl diphosphate synthase (flavodoxin).